Here is a 77-residue protein sequence, read N- to C-terminus: Conotoxin VnMEKL-023 (77 aa).

The N-terminal stretch at 1–19 (MQKLTILLLVAAVLMSTQA) is a signal peptide. A propeptide spanning residues 20–37 (LIKGGGEKRPKEKIRFLS) is cleaved from the precursor. 3 cysteine pairs are disulfide-bonded: Cys-51–Cys-65, Cys-58–Cys-69, and Cys-64–Cys-74.

This sequence belongs to the conotoxin O2 superfamily. In terms of tissue distribution, expressed by the venom duct.

The protein resides in the secreted. The chain is Conotoxin VnMEKL-023 from Conus ventricosus (Mediterranean cone).